A 94-amino-acid polypeptide reads, in one-letter code: Co-chaperonin GroES (94 aa).

The protein belongs to the GroES chaperonin family. As to quaternary structure, heptamer of 7 subunits arranged in a ring. Interacts with the chaperonin GroEL.

It is found in the cytoplasm. Together with the chaperonin GroEL, plays an essential role in assisting protein folding. The GroEL-GroES system forms a nano-cage that allows encapsulation of the non-native substrate proteins and provides a physical environment optimized to promote and accelerate protein folding. GroES binds to the apical surface of the GroEL ring, thereby capping the opening of the GroEL channel. The polypeptide is Co-chaperonin GroES (Acetivibrio thermocellus (strain ATCC 27405 / DSM 1237 / JCM 9322 / NBRC 103400 / NCIMB 10682 / NRRL B-4536 / VPI 7372) (Clostridium thermocellum)).